A 413-amino-acid polypeptide reads, in one-letter code: Phosphopentomutase (413 aa).

Mn(2+)-binding residues include aspartate 11, aspartate 306, histidine 311, aspartate 347, histidine 348, and histidine 359.

The protein belongs to the phosphopentomutase family. The cofactor is Mn(2+).

The protein resides in the cytoplasm. It carries out the reaction 2-deoxy-alpha-D-ribose 1-phosphate = 2-deoxy-D-ribose 5-phosphate. The catalysed reaction is alpha-D-ribose 1-phosphate = D-ribose 5-phosphate. It participates in carbohydrate degradation; 2-deoxy-D-ribose 1-phosphate degradation; D-glyceraldehyde 3-phosphate and acetaldehyde from 2-deoxy-alpha-D-ribose 1-phosphate: step 1/2. Functionally, isomerase that catalyzes the conversion of deoxy-ribose 1-phosphate (dRib-1-P) and ribose 1-phosphate (Rib-1-P) to deoxy-ribose 5-phosphate (dRib-5-P) and ribose 5-phosphate (Rib-5-P), respectively. In Helicobacter pylori (strain P12), this protein is Phosphopentomutase.